We begin with the raw amino-acid sequence, 1066 residues long: FHIP family protein GH13096 (1066 aa).

A compositionally biased stretch (polar residues) spans 1-15 (MSWLRTSPLRQSLTR). Residues 1-33 (MSWLRTSPLRQSLTRNSGGNGSGGSGNSGNASA) form a disordered region. Gly residues predominate over residues 18–27 (GGNGSGGSGN). S512 carries the phosphoserine modification. Disordered stretches follow at residues 647 to 688 (SFKW…NSSG), 827 to 885 (DNSP…RSDN), and 942 to 1010 (SRGV…FNSE). Residues 658–687 (NDATTTTATSDPDVEHNNSSNHNNSSINSS) show a composition bias toward low complexity. Position 829 is a phosphoserine (S829). Residues 836–856 (HQQQQLQHTTNSTHQQQQAQQ) show a composition bias toward low complexity. Residues 950 to 963 (PRGNTCETSLSTTP) are compositionally biased toward polar residues. The span at 967–996 (AQATSASSTNSSIGGSTQTLSATHSSSTLH) shows a compositional bias: low complexity. Residues 1001-1010 (GPQTASFNSE) are compositionally biased toward polar residues.

This sequence belongs to the FHIP family.

The sequence is that of FHIP family protein GH13096 from Drosophila grimshawi (Hawaiian fruit fly).